The chain runs to 82 residues: Small ribosomal subunit protein uS17 (82 aa).

Belongs to the universal ribosomal protein uS17 family. In terms of assembly, part of the 30S ribosomal subunit.

In terms of biological role, one of the primary rRNA binding proteins, it binds specifically to the 5'-end of 16S ribosomal RNA. The protein is Small ribosomal subunit protein uS17 of Rhodopseudomonas palustris (strain BisA53).